Here is a 1056-residue protein sequence, read N- to C-terminus: Carbamoyl phosphate synthase large chain (1056 aa).

Residues 1–398 (MPRDPSIKKV…AFLKALRSLD (398 aa)) are carboxyphosphate synthetic domain. Residues Arg127, Arg167, Gly173, Gly174, Glu206, Val208, Glu213, Gly239, Val240, His241, Gln282, and Glu295 each contribute to the ATP site. The ATP-grasp 1 domain occupies 131–324 (RDLMNRIGEP…IARVASKIAI (194 aa)). The Mg(2+) site is built by Gln282, Glu295, and Asn297. 3 residues coordinate Mn(2+): Gln282, Glu295, and Asn297. The segment at 399 to 532 (TDVEHHTVLS…STYGDKVCEV (134 aa)) is oligomerization domain. The interval 533 to 921 (THSDRKKVMI…YKASIAAHNR (389 aa)) is carbamoyl phosphate synthetic domain. The 192-residue stretch at 663–854 (SVLLDSLSIP…LAKIAARVMM (192 aa)) folds into the ATP-grasp 2 domain. The ATP site is built by Arg699, Arg738, Leu740, Glu745, Gly770, Val771, His772, Ser773, Gln813, and Glu825. Positions 813, 825, and 827 each coordinate Mg(2+). Gln813, Glu825, and Asn827 together coordinate Mn(2+). The MGS-like domain occupies 920 to 1056 (NRLPKSGNVF…IEPLQHYIGR (137 aa)). The tract at residues 922 to 1056 (LPKSGNVFIS…IEPLQHYIGR (135 aa)) is allosteric domain.

The protein belongs to the CarB family. In terms of assembly, composed of two chains; the small (or glutamine) chain promotes the hydrolysis of glutamine to ammonia, which is used by the large (or ammonia) chain to synthesize carbamoyl phosphate. Tetramer of heterodimers (alpha,beta)4. It depends on Mg(2+) as a cofactor. Mn(2+) serves as cofactor.

It carries out the reaction hydrogencarbonate + L-glutamine + 2 ATP + H2O = carbamoyl phosphate + L-glutamate + 2 ADP + phosphate + 2 H(+). The enzyme catalyses hydrogencarbonate + NH4(+) + 2 ATP = carbamoyl phosphate + 2 ADP + phosphate + 2 H(+). The protein operates within amino-acid biosynthesis; L-arginine biosynthesis; carbamoyl phosphate from bicarbonate: step 1/1. It participates in pyrimidine metabolism; UMP biosynthesis via de novo pathway; (S)-dihydroorotate from bicarbonate: step 1/3. Functionally, large subunit of the glutamine-dependent carbamoyl phosphate synthetase (CPSase). CPSase catalyzes the formation of carbamoyl phosphate from the ammonia moiety of glutamine, carbonate, and phosphate donated by ATP, constituting the first step of 2 biosynthetic pathways, one leading to arginine and/or urea and the other to pyrimidine nucleotides. The large subunit (synthetase) binds the substrates ammonia (free or transferred from glutamine from the small subunit), hydrogencarbonate and ATP and carries out an ATP-coupled ligase reaction, activating hydrogencarbonate by forming carboxy phosphate which reacts with ammonia to form carbamoyl phosphate. The protein is Carbamoyl phosphate synthase large chain of Methanospirillum hungatei JF-1 (strain ATCC 27890 / DSM 864 / NBRC 100397 / JF-1).